The sequence spans 428 residues: Phosphoglucosamine mutase (428 aa).

S96 (phosphoserine intermediate) is an active-site residue. S96, D229, D231, and D233 together coordinate Mg(2+). At S96 the chain carries Phosphoserine.

Belongs to the phosphohexose mutase family. Mg(2+) is required as a cofactor. Activated by phosphorylation.

The enzyme catalyses alpha-D-glucosamine 1-phosphate = D-glucosamine 6-phosphate. In terms of biological role, catalyzes the conversion of glucosamine-6-phosphate to glucosamine-1-phosphate. In Thermotoga neapolitana (strain ATCC 49049 / DSM 4359 / NBRC 107923 / NS-E), this protein is Phosphoglucosamine mutase.